The chain runs to 251 residues: Cell division protein ZapD (251 aa).

The protein belongs to the ZapD family. In terms of assembly, interacts with FtsZ.

The protein localises to the cytoplasm. In terms of biological role, cell division factor that enhances FtsZ-ring assembly. Directly interacts with FtsZ and promotes bundling of FtsZ protofilaments, with a reduction in FtsZ GTPase activity. The polypeptide is Cell division protein ZapD (Azoarcus sp. (strain BH72)).